The following is a 388-amino-acid chain: Processive diacylglycerol beta-glucosyltransferase (388 aa).

The protein belongs to the glycosyltransferase 28 family. UgtP subfamily.

Its subcellular location is the cell membrane. It catalyses the reaction a 1,2-diacyl-3-O-(beta-D-glucopyranosyl)-sn-glycerol + UDP-alpha-D-glucose = a 1,2-diacyl-3-O-(beta-D-Glc-(1-&gt;6)-beta-D-Glc)-sn-glycerol + UDP + H(+). It carries out the reaction a 1,2-diacyl-3-O-(beta-D-Glc-(1-&gt;6)-beta-D-Glc)-sn-glycerol + UDP-alpha-D-glucose = a 1,2-diacyl-3-O-(beta-D-Glc-(1-&gt;6)-beta-D-Glc-(1-&gt;6)-beta-D-Glc)-sn-glycerol + UDP + H(+). The catalysed reaction is a 1,2-diacyl-sn-glycerol + UDP-alpha-D-glucose = a 1,2-diacyl-3-O-(beta-D-glucopyranosyl)-sn-glycerol + UDP + H(+). The protein operates within glycolipid metabolism; diglucosyl-diacylglycerol biosynthesis. Processive glucosyltransferase involved in the biosynthesis of both the bilayer- and non-bilayer-forming membrane glucolipids. Is able to successively transfer up to three glucosyl residues to diacylglycerol (DAG), thereby catalyzing the formation of beta-monoglucosyl-DAG (3-O-(beta-D-glucopyranosyl)-1,2-diacyl-sn-glycerol), beta-diglucosyl-DAG (3-O-(beta-D-glucopyranosyl-beta-(1-&gt;6)-D-glucopyranosyl)-1,2-diacyl-sn-glycerol) and beta-triglucosyl-DAG (3-O-(beta-D-glucopyranosyl-beta-(1-&gt;6)-D-glucopyranosyl-beta-(1-&gt;6)-D-glucopyranosyl)-1,2-diacyl-sn-glycerol). Beta-diglucosyl-DAG is the predominant glycolipid found in Bacillales and is also used as a membrane anchor for lipoteichoic acid (LTA). This Bacillus cereus (strain B4264) protein is Processive diacylglycerol beta-glucosyltransferase.